The following is a 76-amino-acid chain: MKNTLFRINELSKKEKATGLTVDEKQEQQMLRQNYTQTFRGSLDSILLNTKIVDQNGLNVTPAALQDAQIRLKLSK.

The protein belongs to the UPF0291 family.

It localises to the cytoplasm. In Bacillus anthracis, this protein is UPF0291 protein BA_1897/GBAA_1897/BAS1759.